Here is a 96-residue protein sequence, read N- to C-terminus: Muconolactone Delta-isomerase (96 aa).

It belongs to the muconolactone Delta-isomerase family. As to quaternary structure, homodecamer.

It catalyses the reaction (S)-muconolactone = (4,5-dihydro-5-oxofuran-2-yl)-acetate. It participates in aromatic compound metabolism; beta-ketoadipate pathway; 5-oxo-4,5-dihydro-2-furylacetate from catechol: step 3/3. This chain is Muconolactone Delta-isomerase (catC), found in Acinetobacter baylyi (strain ATCC 33305 / BD413 / ADP1).